The sequence spans 325 residues: MSFTGSLALAGIGGLVYKFGGGQSYEKLPYVNIPFNQYLDKVYKKHFSKVMSRTRYVLMNFFKDAFTGGAFMYPFKGFLEFNTNKSSYSTTMLGILSSYLIMFALVSFVYWATITPMYTAFLIVLGPIGLFIAIFHSFLQANVFTLLFMRLSHFNNHLVEVCLEKNGLEENLSEVKPIKYYAPINSIYFWAYYFPFKLVKYMLGLSVLFVLLVISFFPLIGPILFHILISPFITQIYFTKVLRLQNFDNIQRRENIYLHAGQYASFGFLAGLIESVPILAGFAISTNTIGSVLFNLDHPMVPENLVETQAEIEAAPQDINQQPNQ.

The Cytoplasmic portion of the chain corresponds to 1–91; sequence MSFTGSLALA…NTNKSSYSTT (91 aa). Residues 92–112 form a helical membrane-spanning segment; sequence MLGILSSYLIMFALVSFVYWA. The Extracellular portion of the chain corresponds to 113–118; that stretch reads TITPMY. Residues 119–139 form a helical membrane-spanning segment; it reads TAFLIVLGPIGLFIAIFHSFL. Residues 140-208 are Cytoplasmic-facing; it reads QANVFTLLFM…VKYMLGLSVL (69 aa). The chain crosses the membrane as a helical span at residues 209 to 229; that stretch reads FVLLVISFFPLIGPILFHILI. Topologically, residues 230–263 are extracellular; the sequence is SPFITQIYFTKVLRLQNFDNIQRRENIYLHAGQY. A helical transmembrane segment spans residues 264–284; sequence ASFGFLAGLIESVPILAGFAI. Residues 285 to 325 are Cytoplasmic-facing; that stretch reads STNTIGSVLFNLDHPMVPENLVETQAEIEAAPQDINQQPNQ.

This sequence belongs to the LDS family.

Its subcellular location is the prospore membrane. The protein localises to the lipid droplet. It localises to the spore wall. Its function is as follows. Involved in spore wall assembly. This chain is Outer spore wall protein LDS1, found in Saccharomyces cerevisiae (strain ATCC 204508 / S288c) (Baker's yeast).